The chain runs to 129 residues: Serum amyloid A-2 protein (129 aa).

Positions 1 to 18 are cleaved as a signal peptide; that stretch reads MKLFTGLIFCSLVLGVSS. Gln-19 is modified (pyrrolidone carboxylic acid). The disordered stretch occupies residues 92-129; sequence GDSGHGVEDSKADQAANEWGRSGKDPNHFRPSGLPDKY.

This sequence belongs to the SAA family. Apolipoprotein of the HDL complex. As to expression, expressed by the liver; secreted in plasma.

It localises to the secreted. Functionally, major acute phase reactant. This is Serum amyloid A-2 protein (SAA2P0DJI9) from Neovison vison (American mink).